The chain runs to 1214 residues: Receptor-type guanylate cyclase gcy-19 (1214 aa).

Residues 1–18 form the signal peptide; sequence MEHLIFLLIFGGYSPSIA. Residues 19–517 lie on the Extracellular side of the membrane; sequence QITSSTTTTT…PQTFVDQYGA (499 aa). Residues Asn85, Asn363, Asn441, and Asn464 are each glycosylated (N-linked (GlcNAc...) asparagine). The chain crosses the membrane as a helical span at residues 518-538; the sequence is LVFSIGGVLALAMLFLITCFF. Residues 539-1214 are Cytoplasmic-facing; it reads YVLRQRKLER…FRRQETLALM (676 aa). A Protein kinase domain is found at 572–859; it reads RMSKRSIQSG…KGNLMDHVFN (288 aa). One can recognise a Guanylate cyclase domain in the interval 917–1047; that stretch reads TVFFSDVVKF…DTVNTASRME (131 aa). The segment at 1116–1197 is disordered; the sequence is NSSNMAYNPE…EKAREIHNEE (82 aa). Residues 1133–1142 are compositionally biased toward acidic residues; it reads DDEDVDDESS. Over residues 1186 to 1197 the composition is skewed to basic and acidic residues; it reads LEEKAREIHNEE.

It belongs to the adenylyl cyclase class-4/guanylyl cyclase family. In terms of tissue distribution, expressed asymmetrically in ASE right (ASER) sensory neuron.

It is found in the cell membrane. The enzyme catalyses GTP = 3',5'-cyclic GMP + diphosphate. Its function is as follows. Guanylate cyclase involved in the production of the second messenger cGMP. This chain is Receptor-type guanylate cyclase gcy-19, found in Caenorhabditis briggsae.